A 1806-amino-acid chain; its full sequence is SH3 and multiple ankyrin repeat domains protein 3 (1806 aa).

The tract at residues Met-76 to Gln-150 is intramolecular interaction with the ANK repeats. Tyr-197 is subject to Phosphotyrosine. 6 ANK repeats span residues Ser-223–Phe-253, Asp-257–Tyr-286, Arg-290–Ile-320, Asn-324–Ala-353, Ser-357–Val-386, and Asn-390–Pro-420. Basic and acidic residues predominate over residues Ala-407–Ser-416. Positions Ala-407–Ser-467 are disordered. A compositionally biased stretch (pro residues) spans Leu-439–Ala-461. Phosphoserine is present on residues Ser-448, Ser-450, Ser-463, Ser-470, and Ser-558. The region spanning Val-546–Met-605 is the SH3 domain. Tyr-631 carries the phosphotyrosine modification. Positions Val-646–Thr-740 constitute a PDZ domain. 2 disordered regions span residues Lys-665–Asp-689 and Pro-760–Pro-853. The tract at residues Pro-753 to Pro-760 is required for interaction with ABI1. Ser-770 is modified (phosphoserine). Positions Ala-813 to Pro-845 are enriched in pro residues. Phosphoserine is present on residues Ser-857, Ser-866, and Ser-877. Residues Arg-871–Lys-1021 form a disordered region. Over residues Asp-906 to Pro-915 the composition is skewed to pro residues. Residues Ser-966 and Ser-973 each carry the phosphoserine modification. At Thr-988 the chain carries Phosphothreonine. Over residues Pro-993–Ser-1013 the composition is skewed to gly residues. The residue at position 1006 (Tyr-1006) is a Phosphotyrosine. An Asymmetric dimethylarginine modification is found at Arg-1041. Residues Pro-1115–Pro-1124 show a composition bias toward low complexity. Disordered regions lie at residues Pro-1115–Leu-1460, Ala-1475–Ala-1525, and Ser-1546–Arg-1584. The segment covering Thr-1173–Ala-1193 has biased composition (basic and acidic residues). At Thr-1204 the chain carries Phosphothreonine. Ser-1208, Ser-1233, Ser-1237, and Ser-1240 each carry phosphoserine. A compositionally biased stretch (pro residues) spans Glu-1251–Lys-1261. The residue at position 1309 (Thr-1309) is a Phosphothreonine. Ser-1328 is subject to Phosphoserine. Residues Leu-1360 to Glu-1370 are compositionally biased toward basic and acidic residues. Low complexity-rich tracts occupy residues Glu-1371–Val-1392 and His-1444–Leu-1460. The SH3-binding signature appears at Pro-1485–Pro-1491. The residue at position 1495 (Ser-1495) is a Phosphoserine. The span at Ser-1495 to Arg-1505 shows a compositional bias: polar residues. Residues Ile-1569–Glu-1589 adopt a coiled-coil conformation. Phosphoserine occurs at positions 1585, 1596, 1604, and 1614. A compositionally biased stretch (low complexity) spans Pro-1627–Ser-1637. The disordered stretch occupies residues Pro-1627–Gly-1664. Positions Val-1638–Ala-1657 are enriched in pro residues. A phosphoserine mark is found at Ser-1709, Ser-1711, and Ser-1713. The SAM domain maps to Trp-1743 to Ser-1806.

As to quaternary structure, may homomultimerize via its SAM domain. Interacts with BAIAP2, DBNL and SLC17A7/VGLUT1. Interacts with DLGAP1/GKAP, GRM1/MGLUR1, GRM5/MGLUR5 and LZTS3 C-termini via its PDZ domain. Interacts with ABI1, HOMER1, HOMER2, HOMER3 and CTTN/cortactin SH3 domain. Is part of a complex with DLG4/PSD-95 and DLGAP1/GKAP. Interacts (via PDZ domain) with the GRIA1 subunit of the AMPA receptor (via PDZ-binding motif). Interacts with WASF1 and CYFIP2; the interactions mediate the association of SHANK3 with the WAVE1 complex. Interacts with ARPC2; the interaction probably mediates the association of SHANK3 with the Arp2/3 complex. Interacts (via ANK repeats) with SHARPIN and SPTAN1. Interacts (via PDZ domain) with ARHGAP44 (probably via PDZ-binding motif); the interaction takes place in dendritic spines and promotes GRIA1 exocytosis. Interacts with CAMK2A. Interacts with DIP2A. Interacts with ADGRL3. In terms of tissue distribution, expressed in the cerebral cortex and the cerebellum.

The protein localises to the cytoplasm. The protein resides in the postsynaptic density. It localises to the cell projection. Its subcellular location is the dendritic spine. In terms of biological role, major scaffold postsynaptic density protein which interacts with multiple proteins and complexes to orchestrate the dendritic spine and synapse formation, maturation and maintenance. Interconnects receptors of the postsynaptic membrane including NMDA-type and metabotropic glutamate receptors via complexes with GKAP/PSD-95 and HOMER, respectively, and the actin-based cytoskeleton. Plays a role in the structural and functional organization of the dendritic spine and synaptic junction through the interaction with Arp2/3 and WAVE1 complex as well as the promotion of the F-actin clusters. By way of this control of actin dynamics, participates in the regulation of developing neurons growth cone motility and the NMDA receptor-signaling. Also modulates GRIA1 exocytosis and GRM5/MGLUR5 expression and signaling to control the AMPA and metabotropic glutamate receptor-mediated synaptic transmission and plasticity. May be required at an early stage of synapse formation and be inhibited by IGF1 to promote synapse maturation. The sequence is that of SH3 and multiple ankyrin repeat domains protein 3 (SHANK3) from Homo sapiens (Human).